The sequence spans 328 residues: Telomere-binding protein cav (328 aa).

The required for binding to Su(var)205 stretch occupies residues arginine 107–glutamate 320. Residues aspartate 139–proline 228 form a disordered region. 2 stretches are compositionally biased toward polar residues: residues glutamine 144–serine 167 and alanine 180–glutamine 189. 2 short sequence motifs (su(var)205-binding Pro-containing repeat) span residues proline 228–methionine 232 and proline 281–glutamate 287. Polar residues predominate over residues isoleucine 295–serine 319. Residues isoleucine 295–alanine 328 are disordered.

Interacts (via C-terminus) with Su(var)205 dimer (via hinge and chromoshadow domain) and with moi to form the terminin, telomere-capping, complex. Interacts with HP6, which is also part of the terminin complex.

The protein resides in the nucleus. It is found in the chromosome. It localises to the telomere. Its function is as follows. Binds to chromosome ends in a sequence-dependent manner and is required for telomere capping. The protein is Telomere-binding protein cav of Drosophila erecta (Fruit fly).